The following is a 430-amino-acid chain: MDLLSDIEKQLQKATAQGFLIALSGGLDSTVLLSLFAKLRQKQPHLPPLSVRAIHIHHGLSPNADSWAKHCQDLCDQFQIPLIIERVQVDKTNGIEAGAREARYQAIKKHLQTQEILVTAHHLNDQTETFFLALKRGSGLQGLGAMQQQSVLFGMPILRPLLGFTRTQLENYAQKEKLNWITDESNGDNRFDRNFLRNEILPKLRERWAYFDLAVQRSAQHCFEQQQLINDLLSEAFAEHCQIKNQFKLCQFRKYSLAKQTALLRMWLAENQLEMPSKRQLTQLINDVVFAKEEANPQFQLVNKVIRRYQDRLYLTKPFSDLTKYCLKLEQNTLSLPDDLGNLSVQENEHNLIFHWQDFSVTLEKTNLPISIRFGYSGKVKHHLKRPREDIKKIWQELSVPPWERNRIPLIFYGNKLKSAVGFFRVFDEY.

24–29 serves as a coordination point for ATP; that stretch reads SGGLDS.

This sequence belongs to the tRNA(Ile)-lysidine synthase family.

Its subcellular location is the cytoplasm. The enzyme catalyses cytidine(34) in tRNA(Ile2) + L-lysine + ATP = lysidine(34) in tRNA(Ile2) + AMP + diphosphate + H(+). Its function is as follows. Ligates lysine onto the cytidine present at position 34 of the AUA codon-specific tRNA(Ile) that contains the anticodon CAU, in an ATP-dependent manner. Cytidine is converted to lysidine, thus changing the amino acid specificity of the tRNA from methionine to isoleucine. This Haemophilus influenzae (strain PittEE) protein is tRNA(Ile)-lysidine synthase.